The sequence spans 476 residues: Adenosylhomocysteinase (476 aa).

Residues Thr67, Asp142, and Glu202 each coordinate substrate. An NAD(+)-binding site is contributed by 203 to 205 (TTT). Residues Lys232 and Asp236 each coordinate substrate. Residues Asn237, 266 to 271 (GYGDVG), Glu289, Asn324, 345 to 347 (IGH), and Asn390 each bind NAD(+).

This sequence belongs to the adenosylhomocysteinase family. The cofactor is NAD(+).

It localises to the cytoplasm. The catalysed reaction is S-adenosyl-L-homocysteine + H2O = L-homocysteine + adenosine. It functions in the pathway amino-acid biosynthesis; L-homocysteine biosynthesis; L-homocysteine from S-adenosyl-L-homocysteine: step 1/1. Functionally, may play a key role in the regulation of the intracellular concentration of adenosylhomocysteine. The polypeptide is Adenosylhomocysteinase (Synechococcus sp. (strain CC9605)).